The sequence spans 196 residues: MTSCSNTCGSRRAQADTEGGYQQRYGVRSYLHQFYEDCTASIWEYEDDFQIQRSPNRWSSVFWKVGLISGTVFVILGLTVLAVGFLVPPKIEAFGEADFMVVDTHAVKYNGALDTCKLAGAVLFCIGGTSMAGCLLMSVFAKSYSKEEKFLQQKFKERIADIKAHTQPITKAPGPGDTKIPVTLSRVQNVQPLSAT.

The next 2 helical transmembrane spans lie at 67–87 (LISG…GFLV) and 121–141 (AVLF…SVFA).

This sequence belongs to the VMP family. In terms of tissue distribution, expressed predominantly in brain. Also weakly expressed in lung and spleen. In brain, expressed strongly in nerve fibers of the cerebral cortex, anterior cerebral nuclei, hypothalamus, amygdaloid complex, brain stem of the metaencephalon and medulla oblongata, and moderately expressed in soma of neurons of the dentate gyrus of the hippocampus and Purkinje cells of the cerebellum.

It is found in the membrane. The protein localises to the cell projection. Its subcellular location is the neuron projection. May play an important role in neural organelle transport, and in transduction of nerve signals or in nerve growth. May play a role in neurite extension. In Mus musculus (Mouse), this protein is Neurensin-1.